The primary structure comprises 371 residues: Leu/Ile/Val-binding protein homolog 1 (371 aa).

The signal sequence occupies residues 1–23; that stretch reads MRKTLFSGVALAAVIAFGGSAWA.

This sequence belongs to the leucine-binding protein family.

In terms of biological role, component of an amino-acid transport system. In Brucella abortus (strain 2308), this protein is Leu/Ile/Val-binding protein homolog 1.